Reading from the N-terminus, the 105-residue chain is POU domain, class 3, transcription factor 3 (105 aa).

In terms of domain architecture, POU-specific spans 1-49; it reads QADVGLALGTLYGNVFSQTTICRFEALQLSFKNMCKLKPLLNKWLEEAD. The homeobox DNA-binding region spans 67–105; sequence KRKKRTSIEVSVKGALESHFLKCPKPAAQEITTLADSLQ.

Belongs to the POU transcription factor family. Class-3 subfamily.

The protein localises to the nucleus. In Xenopus laevis (African clawed frog), this protein is POU domain, class 3, transcription factor 3 (pou3f3).